The chain runs to 458 residues: Argininosuccinate lyase (458 aa).

The protein belongs to the lyase 1 family. Argininosuccinate lyase subfamily.

Its subcellular location is the cytoplasm. The catalysed reaction is 2-(N(omega)-L-arginino)succinate = fumarate + L-arginine. It functions in the pathway amino-acid biosynthesis; L-arginine biosynthesis; L-arginine from L-ornithine and carbamoyl phosphate: step 3/3. This is Argininosuccinate lyase from Actinobacillus pleuropneumoniae serotype 5b (strain L20).